Reading from the N-terminus, the 215-residue chain is MPAQRGGALSMGAAGFWILVLSITSALADSNNQGNSEPCGPPGPPGPPGIPGFPGAPGALGPPGPPGVPGIPGPQGPPGDVEKCSSRPKSAFAVKLSERPPEPFQPIVFKEALYNQEGHFNMATGEFSCVLPGVYNFGFDIRLFQSSVKIRLMRDGIQVREKEAQANDSYKHAMGSVIMALGKGDKVWLESKLKGTESEKGITHIVFFGYLLYGK.

The first 28 residues, 1 to 28, serve as a signal peptide directing secretion; sequence MPAQRGGALSMGAAGFWILVLSITSALA. Residues 29–96 form a disordered region; that stretch reads DSNNQGNSEP…RPKSAFAVKL (68 aa). Pro residues-rich tracts occupy residues 39-51 and 60-77; these read CGPP…PGIP and LGPP…PQGP. Residues 40 to 81 enclose the Collagen-like domain; the sequence is GPPGPPGPPGIPGFPGAPGALGPPGPPGVPGIPGPQGPPGDV. Residues 85-215 enclose the C1q domain; it reads SSRPKSAFAV…VFFGYLLYGK (131 aa). Asparagine 167 carries N-linked (GlcNAc...) asparagine glycosylation.

In terms of tissue distribution, plasma; synthesized in the liver.

The protein resides in the secreted. Functionally, plasma proteins HP-20, HP-25, HP-27 and HP-55 form a 140 kDa complex via disulfide bonds in the plasma and are hibernation specific. This is Hibernation-associated plasma protein HP-25 from Tamias sibiricus (Siberian chipmunk).